The following is a 539-amino-acid chain: Peptide chain release factor 3 (539 aa).

The 270-residue stretch at 14–283 (EKRRNFAIIS…AFLEYALQPE (270 aa)) folds into the tr-type G domain. GTP contacts are provided by residues 23–30 (SHPDAGKT), 91–95 (DTPGH), and 145–148 (NKLD).

The protein belongs to the TRAFAC class translation factor GTPase superfamily. Classic translation factor GTPase family. PrfC subfamily.

It is found in the cytoplasm. Its function is as follows. Increases the formation of ribosomal termination complexes and stimulates activities of RF-1 and RF-2. It binds guanine nucleotides and has strong preference for UGA stop codons. It may interact directly with the ribosome. The stimulation of RF-1 and RF-2 is significantly reduced by GTP and GDP, but not by GMP. The protein is Peptide chain release factor 3 of Rippkaea orientalis (strain PCC 8801 / RF-1) (Cyanothece sp. (strain PCC 8801)).